We begin with the raw amino-acid sequence, 261 residues long: Pantothenate synthetase (261 aa).

Position 29-36 (29-36) interacts with ATP; the sequence is MGALHNGH. The active-site Proton donor is His36. Residue Gln60 participates in (R)-pantoate binding. Gln60 provides a ligand contact to beta-alanine. 147–150 is an ATP binding site; the sequence is GEKD. A (R)-pantoate-binding site is contributed by Gln153. 184-187 is a binding site for ATP; sequence LSSR.

This sequence belongs to the pantothenate synthetase family. In terms of assembly, homodimer.

It is found in the cytoplasm. It carries out the reaction (R)-pantoate + beta-alanine + ATP = (R)-pantothenate + AMP + diphosphate + H(+). It functions in the pathway cofactor biosynthesis; (R)-pantothenate biosynthesis; (R)-pantothenate from (R)-pantoate and beta-alanine: step 1/1. Catalyzes the condensation of pantoate with beta-alanine in an ATP-dependent reaction via a pantoyl-adenylate intermediate. The protein is Pantothenate synthetase of Francisella philomiragia subsp. philomiragia (strain ATCC 25017 / CCUG 19701 / FSC 153 / O#319-036).